The primary structure comprises 476 residues: Protein transport protein Sec61 subunit alpha (476 aa).

Over 2–33 (GIKFLEFIKPFCAVLPEIQKPERKIQFREKVL) the chain is Cytoplasmic. A helical membrane pass occupies residues 34–53 (WTAITLFIFLVCCQIPLFGI). Topologically, residues 54–76 (MSSDSADPFYWMRVILASNRGTL) are lumenal. A helical transmembrane segment spans residues 77–96 (MELGISPIVTSGLIMQLLAG). Residues 97–117 (AKIIEVGDTPKDRALFNGAQK) are Cytoplasmic-facing. The helical transmembrane segment at 118-138 (LFGMIITIGQAIVYVMTGMYG) threads the bilayer. The Lumenal segment spans residues 139–144 (DPSEMG). Residues 145–165 (AGICLLIIIQLFVAGLIVLLL) form a helical membrane-spanning segment. Topologically, residues 166 to 172 (DELLQKG) are cytoplasmic. A helical transmembrane segment spans residues 173–193 (YGLGSGISLFIATNICETIVW). The Lumenal segment spans residues 194 to 240 (KAFSPTTVNTGRGTEFEGAIIALFHLLATRTDKVRALREAFYRQNLP). The chain crosses the membrane as a helical span at residues 241-261 (NILNLIATVFVFAVVIYFQGF). Residues 262 to 288 (RVDLPIKSARYRGQYNTYPIKLFYTSN) are Cytoplasmic-facing. Residues 289–309 (IPIILQSALVSNLYVISQMLS) traverse the membrane as a helical segment. Residues 310–354 (TRFSGNFLVNLLGTWSDATSGGPARAYPVAGLCYYLSPPESFGSV) are Lumenal-facing. Residues 355–375 (LDDPVHAAIYIVFMLGSCAFF) form a helical membrane-spanning segment. Over 376–420 (SKTWIEVSGSSAKDVAKQLKEQQMVMRGHRETSMVHELNRYIPTA) the chain is Cytoplasmic. The chain crosses the membrane as a helical span at residues 421 to 441 (AAFGGLCIGGLSVMADFLGAI). Over 442–445 (GSGT) the chain is Lumenal. A helical membrane pass occupies residues 446 to 462 (GILLAVTIIYQYFEIFV). Topologically, residues 463 to 476 (KEQSEMGSMGALLF) are cytoplasmic.

Belongs to the SecY/SEC61-alpha family. The SEC61 channel-forming translocon complex consists of channel-forming core components SEC61A1, SEC61B and SEC61G and different auxiliary components such as SEC62 and SEC63. The SEC61 channel associates with the multi-pass translocon (MPT) complex.

It localises to the endoplasmic reticulum membrane. Functionally, component of SEC61 channel-forming translocon complex that mediates transport of signal peptide-containing precursor polypeptides across the endoplasmic reticulum (ER). Forms a ribosome receptor and a gated pore in the ER membrane, both functions required for cotranslational translocation of nascent polypeptides. May cooperate with auxiliary protein SEC62, SEC63 and HSPA5/BiP to enable post-translational transport of small presecretory proteins. The SEC61 channel is also involved in ER membrane insertion of transmembrane proteins: it mediates membrane insertion of the first few transmembrane segments of proteins, while insertion of subsequent transmembrane regions of multi-pass membrane proteins is mediated by the multi-pass translocon (MPT) complex. This Notothenia angustata (Rockcod) protein is Protein transport protein Sec61 subunit alpha (sec61a).